The chain runs to 130 residues: MENSALSNCVRRTNFSNQQRTMQEGLEESSWTMYFETEDGLGHYDDSSMMSDAASPMGCVEEDTASSPSNRTEGYSGMEDNTIEEKTMNNGKIEEKILNKNGIKIEEYCAELKKRGLCLVPLSMLSNYIG.

Residues 45 to 81 (DDSSMMSDAASPMGCVEEDTASSPSNRTEGYSGMEDN) form a disordered region.

Its function is as follows. Involved in the regulation of plant growth. The sequence is that of Vascular-related unknown protein 3 from Arabidopsis thaliana (Mouse-ear cress).